Consider the following 98-residue polypeptide: Cystatin-B (98 aa).

Met-1 is modified (N-acetylmethionine). The Secondary area of contact motif lies at 46–50 (QLVAG).

This sequence belongs to the cystatin family. As to quaternary structure, able to form dimers stabilized by noncovalent forces.

It is found in the cytoplasm. Its function is as follows. This is an intracellular thiol proteinase inhibitor. The chain is Cystatin-B (CSTB) from Ovis aries (Sheep).